Here is a 350-residue protein sequence, read N- to C-terminus: NAD-dependent protein deacetylase sirtuin-2 (350 aa).

The Nuclear export signal motif lies at 4–14 (LRNLFTQTLGL). Ser16 is modified (phosphoserine). The region spanning 20–301 (RLLDELTLEG…LALADLLGWK (282 aa)) is the Deacetylase sirtuin-type domain. Residues 48-52 (AGIST) and 58-60 (DFR) contribute to the NAD(+) site. Ser63 bears the Phosphoserine mark. Position 130-133 (130-133 (QNID)) interacts with NAD(+). His150 serves as the catalytic Proton acceptor. Zn(2+) contacts are provided by Cys158 and Cys163. Ser170 carries the post-translational modification Phosphoserine. Zn(2+) is bound by residues Cys184 and Cys187. Residues 225–226 (TS), 249–251 (NKE), and Cys287 each bind NAD(+). A disordered region spans residues 312–350 (ANIDAQSGSQASNPSATVSPRKSPPPAKEAARTKEKEEH). Polar residues predominate over residues 315–331 (DAQSGSQASNPSATVSP). Ser330 and Ser334 each carry phosphoserine. Residues 340–350 (EAARTKEKEEH) are compositionally biased toward basic and acidic residues.

This sequence belongs to the sirtuin family. Class I subfamily. In terms of assembly, interacts with CDC20, FOXO3 and FZR1. Associates with microtubules in primary cortical mature neurons. Homotrimer. Interacts (via both phosphorylated, unphosphorylated, active or inactive forms) with HDAC6; the interaction is necessary for the complex to interact with alpha-tubulin, suggesting that these proteins belong to a large complex that deacetylates the cytoskeleton. Interacts with FOXO1; the interaction is disrupted upon serum-starvation or oxidative stress, leading to increased level of acetylated FOXO1 and induction of autophagy. Interacts with RELA; the interaction occurs in the cytoplasm and is increased in a TNF-alpha-dependent manner. Interacts with HOXA10; the interaction is direct. Interacts with YWHAB and YWHAG; the interactions occur in a AKT-dependent manner and increase SIRT2-dependent TP53 deacetylation. Interacts with MAPK1/ERK2 and MAPK3/ERK1; the interactions increase SIRT2 stability and deacetylation activity. Interacts (phosphorylated form) with KMT5A isoform 2; the interaction is direct, stimulates KMT5A-mediated methyltransferase activity on histone at 'Lys-20' (H4K20me1) and is increased in a H(2)O(2)-induced oxidative stress-dependent manner. Interacts with G6PD; the interaction is enhanced by H(2)O(2) treatment. Interacts with a G1/S-specific cyclin E-CDK2 complex. Interacts with AURKA, CDK5R1 (p35 form) and CDK5 and HIF1A. Interacts with the tRNA ligase SARS1; recruited to the VEGFA promoter via interaction with SARS1. Interacts with BEX4; negatively regulates alpha-tubulin deacetylation by SIRT2. The cofactor is Zn(2+). Phosphorylated at phosphoserine and phosphothreonine. Phosphorylated at Ser-330 by a mitotic kinase CDK1/cyclin B at the G2/M transition; phosphorylation regulates the delay in cell-cycle progression. Phosphorylated at Ser-330 by a mitotic kinase G1/S-specific cyclin E/Cdk2 complex; phosphorylation inactivates SIRT2-mediated alpha-tubulin deacetylation and thereby negatively regulates cell adhesion, cell migration and neurite outgrowth during neuronal differentiation. Phosphorylated by cyclin A/Cdk2 and p35-Cdk5 complexes and to a lesser extent by the cyclin D3/Cdk4 and cyclin B/Cdk1, in vitro. Dephosphorylated at Ser-330 by CDC14A and CDC14B around early anaphase. In terms of processing, acetylated by EP300; acetylation leads both to the decreased of SIRT2-mediated alpha-tubulin deacetylase activity and SIRT2-mediated down-regulation of TP53 transcriptional activity. Post-translationally, ubiquitinated. Expressed in the cerebellum, cerebral cortex and cervival spinal cord. Expressed in Purkinje cells, oligodendrocytes and Schwann cells (at protein level). Expressed in the central nervous system (CNS).

The protein resides in the nucleus. It localises to the cytoplasm. The protein localises to the perinuclear region. It is found in the cytoskeleton. Its subcellular location is the microtubule organizing center. The protein resides in the centrosome. It localises to the centriole. The protein localises to the spindle. It is found in the midbody. Its subcellular location is the chromosome. The protein resides in the perikaryon. It localises to the cell projection. The protein localises to the growth cone. It is found in the myelin membrane. The catalysed reaction is N(6)-acetyl-L-lysyl-[protein] + NAD(+) + H2O = 2''-O-acetyl-ADP-D-ribose + nicotinamide + L-lysyl-[protein]. The enzyme catalyses N(6)-tetradecanoyl-L-lysyl-[protein] + NAD(+) + H2O = 2''-O-tetradecanoyl-ADP-D-ribose + nicotinamide + L-lysyl-[protein]. It catalyses the reaction N(6)-hexadecanoyl-L-lysyl-[protein] + NAD(+) + H2O = 2''-O-hexadecanoyl-ADP-D-ribose + nicotinamide + L-lysyl-[protein]. Its activity is regulated as follows. Inhibited by Sirtinol, A3 and M15 small molecules. Inhibited by nicotinamide. Inhibited by a macrocyclic peptide inhibitor S2iL5. Inhibited by EP300-induced acetylation. NAD-dependent protein deacetylase, which deacetylates internal lysines on histone and alpha-tubulin as well as many other proteins such as key transcription factors. Participates in the modulation of multiple and diverse biological processes such as cell cycle control, genomic integrity, microtubule dynamics, cell differentiation, metabolic networks, and autophagy. Plays a major role in the control of cell cycle progression and genomic stability. Functions in the antephase checkpoint preventing precocious mitotic entry in response to microtubule stress agents, and hence allowing proper inheritance of chromosomes. Positively regulates the anaphase promoting complex/cyclosome (APC/C) ubiquitin ligase complex activity by deacetylating CDC20 and FZR1, then allowing progression through mitosis. Associates both with chromatin at transcriptional start sites (TSSs) and enhancers of active genes. Plays a role in cell cycle and chromatin compaction through epigenetic modulation of the regulation of histone H4 'Lys-20' methylation (H4K20me1) during early mitosis. Specifically deacetylates histone H4 at 'Lys-16' (H4K16ac) between the G2/M transition and metaphase enabling H4K20me1 deposition by KMT5A leading to ulterior levels of H4K20me2 and H4K20me3 deposition throughout cell cycle, and mitotic S-phase progression. Deacetylates KMT5A modulating KMT5A chromatin localization during the mitotic stress response. Also deacetylates histone H3 at 'Lys-57' (H3K56ac) during the mitotic G2/M transition. During oocyte meiosis progression, may deacetylate histone H4 at 'Lys-16' (H4K16ac) and alpha-tubulin, regulating spindle assembly and chromosome alignment by influencing microtubule dynamics and kinetochore function. Deacetylates histone H4 at 'Lys-16' (H4K16ac) at the VEGFA promoter and thereby contributes to regulate expression of VEGFA, a key regulator of angiogenesis. Deacetylates alpha-tubulin at 'Lys-40' and hence controls neuronal motility, oligodendroglial cell arbor projection processes and proliferation of non-neuronal cells. Phosphorylation at Ser-368 by a G1/S-specific cyclin E-CDK2 complex inactivates SIRT2-mediated alpha-tubulin deacetylation, negatively regulating cell adhesion, cell migration and neurite outgrowth during neuronal differentiation. Deacetylates PARD3 and participates in the regulation of Schwann cell peripheral myelination formation during early postnatal development and during postinjury remyelination. Involved in several cellular metabolic pathways. Plays a role in the regulation of blood glucose homeostasis by deacetylating and stabilizing phosphoenolpyruvate carboxykinase PCK1 activity in response to low nutrient availability. Acts as a key regulator in the pentose phosphate pathway (PPP) by deacetylating and activating the glucose-6-phosphate G6PD enzyme, and therefore, stimulates the production of cytosolic NADPH to counteract oxidative damage. Maintains energy homeostasis in response to nutrient deprivation as well as energy expenditure by inhibiting adipogenesis and promoting lipolysis. Attenuates adipocyte differentiation by deacetylating and promoting FOXO1 interaction to PPARG and subsequent repression of PPARG-dependent transcriptional activity. Plays a role in the regulation of lysosome-mediated degradation of protein aggregates by autophagy in neuronal cells. Deacetylates FOXO1 in response to oxidative stress or serum deprivation, thereby negatively regulating FOXO1-mediated autophagy. Deacetylates a broad range of transcription factors and co-regulators regulating target gene expression. Deacetylates transcriptional factor FOXO3 stimulating the ubiquitin ligase SCF(SKP2)-mediated FOXO3 ubiquitination and degradation. Deacetylates HIF1A and therefore promotes HIF1A degradation and inhibition of HIF1A transcriptional activity in tumor cells in response to hypoxia. Deacetylates RELA in the cytoplasm inhibiting NF-kappaB-dependent transcription activation upon TNF-alpha stimulation. Inhibits transcriptional activation by deacetylating p53/TP53 and EP300. Also deacetylates EIF5A. Functions as a negative regulator on oxidative stress-tolerance in response to anoxia-reoxygenation conditions. Plays a role as tumor suppressor. In addition to protein deacetylase activity, also has activity toward long-chain fatty acyl groups and mediates protein-lysine demyristoylation and depalmitoylation of target proteins, such as ARF6 and KRAS, thereby regulating their association with membranes. This Rattus norvegicus (Rat) protein is NAD-dependent protein deacetylase sirtuin-2 (Sirt2).